Consider the following 97-residue polypeptide: Protein RnfH (97 aa).

Belongs to the UPF0125 (RnfH) family.

The sequence is that of Protein RnfH from Halorhodospira halophila (strain DSM 244 / SL1) (Ectothiorhodospira halophila (strain DSM 244 / SL1)).